Consider the following 165-residue polypeptide: REP-associated tyrosine transposase (165 aa).

This sequence belongs to the transposase 17 family. RAYT subfamily. In terms of assembly, monomer.

With respect to regulation, cleavage occurs in the presence of magnesium, but is much more pronounced with manganese. In terms of biological role, transposase that is always flanked by repeated extragenic palindrome (REP) sequences, which are clustered in structures called bacterial interspersed mosaic elements (BIMEs). RayT catalyzes cleavage and recombination of BIMEs. Binds REP sequences and cleaves BIMEs both upstream and downstream of the REP sequence. Could be important in the creation of BIME variability and amplification. The chain is REP-associated tyrosine transposase from Escherichia coli (strain K12).